A 57-amino-acid polypeptide reads, in one-letter code: Neurotoxin Oh9-1 (57 aa).

4 disulfides stabilise this stretch: Cys-3-Cys-19, Cys-12-Cys-37, Cys-41-Cys-49, and Cys-50-Cys-55.

The protein belongs to the three-finger toxin family. Short-chain subfamily. As to expression, expressed by the venom gland.

The protein resides in the secreted. Its function is as follows. This toxin binds and inhibits rat muscle adult alpha-1-beta-1-delta-epsilon/CHRNA1-CHRNB1-CHRND-CHRNE (IC(50)=3.1 uM) and fetal alpha-1-beta-1-gamma-delta/CHRNA1-CHRNB1-CHRNG-CHRND (IC(50)=5.6 uM) nicotinic acetylcholine receptors (nAChR). Shows a very low inhibition on rat neuronal alpha-3-beta-2/CHRNA3-CHRNB2 nAChR (IC(50)=50.2 uM) nAChR. Binds to the acetylcholine-binding pocket and acts as a competitive antagonist. Does not inhibit human glycine receptor (homopentamer composed of alpha-1 subunits, GLRA1), but seems to potentiate it (about 2-fold increased activity). In Ophiophagus hannah (King cobra), this protein is Neurotoxin Oh9-1.